Reading from the N-terminus, the 280-residue chain is Acetylglutamate kinase (280 aa).

Substrate-binding positions include 64 to 65 (GG), Arg86, and Asn179.

This sequence belongs to the acetylglutamate kinase family. ArgB subfamily.

The protein resides in the cytoplasm. It catalyses the reaction N-acetyl-L-glutamate + ATP = N-acetyl-L-glutamyl 5-phosphate + ADP. It functions in the pathway amino-acid biosynthesis; L-arginine biosynthesis; N(2)-acetyl-L-ornithine from L-glutamate: step 2/4. Functionally, catalyzes the ATP-dependent phosphorylation of N-acetyl-L-glutamate. The polypeptide is Acetylglutamate kinase (Campylobacter fetus subsp. fetus (strain 82-40)).